A 187-amino-acid polypeptide reads, in one-letter code: Elongation factor P (187 aa).

This sequence belongs to the elongation factor P family.

It is found in the cytoplasm. The protein operates within protein biosynthesis; polypeptide chain elongation. In terms of biological role, involved in peptide bond synthesis. Stimulates efficient translation and peptide-bond synthesis on native or reconstituted 70S ribosomes in vitro. Probably functions indirectly by altering the affinity of the ribosome for aminoacyl-tRNA, thus increasing their reactivity as acceptors for peptidyl transferase. The protein is Elongation factor P of Jannaschia sp. (strain CCS1).